A 990-amino-acid chain; its full sequence is Importin beta-like protein kap111 (990 aa).

The protein belongs to the importin beta family.

Its subcellular location is the nucleus. Functionally, functions as a component of the nuclear pore complex (NPC). NPC components, collectively referred to as nucleoporins (NUPs), can play the role of both NPC structural components and of docking or interaction partners for transiently associated nuclear transport factors. Active directional transport is assured by both, a Phe-Gly (FG) repeat affinity gradient for these transport factors across the NPC and a transport cofactor concentration gradient across the nuclear envelope. The chain is Importin beta-like protein kap111 (kap111) from Schizosaccharomyces pombe (strain 972 / ATCC 24843) (Fission yeast).